Reading from the N-terminus, the 384-residue chain is tRNA-specific 2-thiouridylase MnmA (384 aa).

Residues 29–36 and Leu-55 contribute to the ATP site; that span reads AMSGGVDS. The active-site Nucleophile is Cys-123. Cys-123 and Cys-220 are oxidised to a cystine. ATP is bound at residue Gly-147. Residues 169–171 form an interaction with tRNA region; that stretch reads RDQ. Cys-220 (cysteine persulfide intermediate) is an active-site residue.

It belongs to the MnmA/TRMU family.

Its subcellular location is the cytoplasm. The catalysed reaction is S-sulfanyl-L-cysteinyl-[protein] + uridine(34) in tRNA + AH2 + ATP = 2-thiouridine(34) in tRNA + L-cysteinyl-[protein] + A + AMP + diphosphate + H(+). Catalyzes the 2-thiolation of uridine at the wobble position (U34) of tRNA, leading to the formation of s(2)U34. The polypeptide is tRNA-specific 2-thiouridylase MnmA (Dinoroseobacter shibae (strain DSM 16493 / NCIMB 14021 / DFL 12)).